The chain runs to 416 residues: Gamma-glutamyl phosphate reductase (416 aa).

This sequence belongs to the gamma-glutamyl phosphate reductase family.

The protein localises to the cytoplasm. It carries out the reaction L-glutamate 5-semialdehyde + phosphate + NADP(+) = L-glutamyl 5-phosphate + NADPH + H(+). The protein operates within amino-acid biosynthesis; L-proline biosynthesis; L-glutamate 5-semialdehyde from L-glutamate: step 2/2. Catalyzes the NADPH-dependent reduction of L-glutamate 5-phosphate into L-glutamate 5-semialdehyde and phosphate. The product spontaneously undergoes cyclization to form 1-pyrroline-5-carboxylate. The sequence is that of Gamma-glutamyl phosphate reductase from Leptospira borgpetersenii serovar Hardjo-bovis (strain JB197).